A 176-amino-acid chain; its full sequence is Gamma-crystallin M2 (176 aa).

2 consecutive Beta/gamma crystallin 'Greek key' domains span residues 2-40 (GKVI…RVEG) and 41-83 (GCWV…RIIP). Residues 84–88 (QYRGS) form a connecting peptide region. 2 consecutive Beta/gamma crystallin 'Greek key' domains span residues 89-129 (YRMR…HVMD) and 130-172 (GYWI…RRIM).

This sequence belongs to the beta/gamma-crystallin family. As to quaternary structure, monomer.

Functionally, crystallins are the dominant structural components of the vertebrate eye lens. In Chiloscyllium indicum (Slender bamboo shark), this protein is Gamma-crystallin M2 (GM2).